Here is a 447-residue protein sequence, read N- to C-terminus: Trigger factor (447 aa).

The region spanning 164–249 (GNQVTFDFEG…VKLVEKSKLP (86 aa)) is the PPIase FKBP-type domain.

The protein belongs to the FKBP-type PPIase family. Tig subfamily.

The protein localises to the cytoplasm. It catalyses the reaction [protein]-peptidylproline (omega=180) = [protein]-peptidylproline (omega=0). Its function is as follows. Involved in protein export. Acts as a chaperone by maintaining the newly synthesized protein in an open conformation. Functions as a peptidyl-prolyl cis-trans isomerase. The protein is Trigger factor of Psychrobacter arcticus (strain DSM 17307 / VKM B-2377 / 273-4).